The sequence spans 366 residues: Transcription factor IIIA (366 aa).

C2H2-type zinc fingers lie at residues 35–59 (YICS…LCKH), 65–89 (FPCK…SLTH), 95–120 (FTCD…NRFH), 127–151 (YVCH…QFSH), 157–181 (YECP…EKVH), 184–210 (YPCK…AECH), 214–236 (AVCD…QKTH), 243–268 (YLCP…QSFH), and 274–298 (FVCE…SVVH). Phosphoserine; by CK2 is present on serine 38. Residues 299 to 310 (DPEKRKLKEKCP) show a composition bias toward basic and acidic residues. Positions 299 to 366 (DPEKRKLKEK…SLVLDKLTIQ (68 aa)) are disordered. A Phosphoserine; by CK2; in vitro modification is found at serine 336.

In terms of processing, the N-terminus is blocked. As to expression, synthesized in oocytes and, in much lower levels, in somatic cells.

The protein resides in the nucleus. Functionally, involved in ribosomal large subunit biogenesis. Acts both as a positive transcription factor for 5S RNA genes, and as a specific RNA binding protein that complexes with 5S RNA in oocytes to form the 7S ribonucleoprotein storage particle. May play an essential role in the developmental change in 5S RNA gene expression. Interacts with the internal control region (ICR) of approximately 50 bases within the 5S RNA genes, is required for correct transcription of these genes by RNA polymerase III. Also binds the transcribed 5S RNA's. The chain is Transcription factor IIIA (gtf3a) from Xenopus laevis (African clawed frog).